The following is a 668-amino-acid chain: Acetoin catabolism regulatory protein (668 aa).

The region spanning 341 to 570 (LTGGDAALQL…NVLEYARAVC (230 aa)) is the Sigma-54 factor interaction domain. Residues 369–376 (GETGSGKE) and 433–442 (ADGGTLFLDE) contribute to the ATP site. Low complexity predominate over residues 586–606 (GPAPSAALPQPGPAQSPAAAP). The interval 586–611 (GPAPSAALPQPGPAQSPAAAPFDPHQ) is disordered. Positions 630-649 (LSAVARQIGVSRMTLYRRME) form a DNA-binding region, H-T-H motif.

Its function is as follows. Required for sigma-54-dependent transcription of acoXABC. The chain is Acetoin catabolism regulatory protein (acoR) from Cupriavidus necator (strain ATCC 17699 / DSM 428 / KCTC 22496 / NCIMB 10442 / H16 / Stanier 337) (Ralstonia eutropha).